The chain runs to 249 residues: 5'-nucleotidase SurE (249 aa).

D8, D9, S39, and N91 together coordinate a divalent metal cation.

This sequence belongs to the SurE nucleotidase family. It depends on a divalent metal cation as a cofactor.

The protein resides in the cytoplasm. The enzyme catalyses a ribonucleoside 5'-phosphate + H2O = a ribonucleoside + phosphate. Nucleotidase that shows phosphatase activity on nucleoside 5'-monophosphates. This chain is 5'-nucleotidase SurE, found in Stutzerimonas stutzeri (strain A1501) (Pseudomonas stutzeri).